A 463-amino-acid chain; its full sequence is T-box transcription factor TBX1-B (463 aa).

Disordered stretches follow at residues 39-58 and 75-102; these read SPSPGDPYSQHEPHYEPCSA and GASSSSCASSTPGSGSTGSSSGNKAPVK. The span at 75–96 shows a compositional bias: low complexity; the sequence is GASSSSCASSTPGSGSTGSSSG. The segment at residues 119–297 is a DNA-binding region (T-box); the sequence is LWDEFNQLGT…SNPFAKGFRD (179 aa). Disordered regions lie at residues 320–343 and 367–406; these read RSRNPVSSPPQNGSDKDGDGRREY and SPSLPVPGGLVPLSTGRPSPPHELRLDPHSQGSEPLHHHP. Polar residues predominate over residues 323–332; the sequence is NPVSSPPQNG. Residues 333–343 are compositionally biased toward basic and acidic residues; the sequence is SDKDGDGRREY. Positions 367–380 are enriched in low complexity; the sequence is SPSLPVPGGLVPLS. Positions 420–431 match the Nuclear localization signal motif; that stretch reads KTRPAPYPLPSI.

As to quaternary structure, binds DNA as a dimer. Interacts with dscr6/ripply3.

Its subcellular location is the nucleus. Probable transcriptional regulator involved in developmental processes. Binds to the palindromic T site 5'-TTCACACCTAGGTGTGAA-3' DNA sequence. Induces pre-placodal ectoderm (PPE) gene expression in regions where RIPPLY3 is absent. Plays a role in the formation of the anteroposterior (AP) axis during embryonic development; required to establish the posterolateral border of the pre-placodal ectoderm (PPE) acting downstream of the retinoic acid receptor (RAR) signaling. Its function is as follows. Probable transcriptional regulator involved in developmental processes. Binds to the palindromic T site 5'-TTCACACCTAGGTGTGAA-3' DNA sequence. Is required for normal development of the pharyngeal arch arteries. This Xenopus laevis (African clawed frog) protein is T-box transcription factor TBX1-B (tbx1-b).